A 382-amino-acid polypeptide reads, in one-letter code: D-galactonate dehydratase (382 aa).

Asp183 contributes to the Mg(2+) binding site. The active-site Proton donor is the His185. Mg(2+) contacts are provided by Glu209 and Glu235. His285 functions as the Proton acceptor in the catalytic mechanism.

It belongs to the mandelate racemase/muconate lactonizing enzyme family. GalD subfamily. The cofactor is Mg(2+).

It catalyses the reaction D-galactonate = 2-dehydro-3-deoxy-D-galactonate + H2O. The protein operates within carbohydrate acid metabolism; D-galactonate degradation; D-glyceraldehyde 3-phosphate and pyruvate from D-galactonate: step 1/3. In terms of biological role, catalyzes the dehydration of D-galactonate to 2-keto-3-deoxy-D-galactonate. The protein is D-galactonate dehydratase of Pectobacterium atrosepticum (strain SCRI 1043 / ATCC BAA-672) (Erwinia carotovora subsp. atroseptica).